The chain runs to 576 residues: Glutamine--tRNA ligase (576 aa).

Positions Pro-47–His-57 match the 'HIGH' region motif. ATP-binding positions include Glu-48–Asn-50 and His-54–Ser-60. 2 residues coordinate L-glutamine: Asp-80 and Tyr-229. Residues Thr-248 and Arg-283–Leu-284 each bind ATP. Positions Ile-290–Arg-294 match the 'KMSKS' region motif.

Belongs to the class-I aminoacyl-tRNA synthetase family. In terms of assembly, monomer.

Its subcellular location is the cytoplasm. The catalysed reaction is tRNA(Gln) + L-glutamine + ATP = L-glutaminyl-tRNA(Gln) + AMP + diphosphate. The chain is Glutamine--tRNA ligase from Ralstonia pickettii (strain 12J).